We begin with the raw amino-acid sequence, 204 residues long: MKDTSLPSTAGAVNKLIDSLGKLPGIGPKSAQRLAFYLMRAPEEQVLTLSDTIRSIKNQISQCRICFNVADSELCPICQNTKREANKICVVEQPQDILALEHVGVYRGYYHVLHGAISPTEGITSQNIRINELMSRLNDGQVDEVILATNPTTEGEATAMYLSRLITPLGIKVTRLARGLPFGTELEYADDVTLSRAMEGRQNF.

The C4-type zinc finger occupies 63 to 78 (CRICFNVADSELCPIC). A Toprim domain is found at 86-181 (NKICVVEQPQ…KVTRLARGLP (96 aa)).

Belongs to the RecR family.

Functionally, may play a role in DNA repair. It seems to be involved in an RecBC-independent recombinational process of DNA repair. It may act with RecF and RecO. The polypeptide is Recombination protein RecR (Dehalococcoides mccartyi (strain ATCC BAA-2266 / KCTC 15142 / 195) (Dehalococcoides ethenogenes (strain 195))).